A 571-amino-acid chain; its full sequence is Urease subunit alpha (571 aa).

The Urease domain occupies 133-571; the sequence is GGIDTHVHFV…LPLTQRYFLF (439 aa). Residues H138, H140, and K221 each contribute to the Ni(2+) site. K221 bears the N6-carboxylysine mark. H223 is a binding site for substrate. Positions 250 and 276 each coordinate Ni(2+). The active-site Proton donor is H324. D364 lines the Ni(2+) pocket.

This sequence belongs to the metallo-dependent hydrolases superfamily. Urease alpha subunit family. In terms of assembly, heterotrimer of UreA (gamma), UreB (beta) and UreC (alpha) subunits. Three heterotrimers associate to form the active enzyme. Ni cation is required as a cofactor. Post-translationally, carboxylation allows a single lysine to coordinate two nickel ions.

It localises to the cytoplasm. The catalysed reaction is urea + 2 H2O + H(+) = hydrogencarbonate + 2 NH4(+). It participates in nitrogen metabolism; urea degradation; CO(2) and NH(3) from urea (urease route): step 1/1. This is Urease subunit alpha from Staphylococcus xylosus.